The primary structure comprises 484 residues: UDP-N-acetylmuramate--L-alanine ligase (484 aa).

Residue 127–133 (GTHGKTT) coordinates ATP.

The protein belongs to the MurCDEF family.

It is found in the cytoplasm. The enzyme catalyses UDP-N-acetyl-alpha-D-muramate + L-alanine + ATP = UDP-N-acetyl-alpha-D-muramoyl-L-alanine + ADP + phosphate + H(+). It participates in cell wall biogenesis; peptidoglycan biosynthesis. In terms of biological role, cell wall formation. The sequence is that of UDP-N-acetylmuramate--L-alanine ligase from Shewanella amazonensis (strain ATCC BAA-1098 / SB2B).